A 406-amino-acid polypeptide reads, in one-letter code: Kelch domain-containing protein 2 (406 aa).

6 Kelch repeats span residues 31–85 (ERSG…NTEG), 92–136 (SGSC…ERID), 148–207 (LGVW…IWSQ), 221–259 (HACA…NELI), 271–311 (HSLT…IKFN), and 322–359 (HTAC…IFSV).

In terms of assembly, component of a CRL2(KLHDC2) E3 ubiquitin-protein ligase complex, also named ECS(KLHDC2) complex, composed of CUL2, Elongin BC (ELOB and ELOC), RBX1 and substrate-specific adapter KLHDC2. May form oligomers as a KLHDC2-ELOB-ELOC complex; this interaction is autoinhibitory for the E3 ligase complex as the substrate-binding site of KLHDC2 is blocked in the oligomer. Interacts with CREB3; interaction is direct and specific as it does not interact with CREB1, ATF4, ATF6, JUN, FOS, CEBPA or herpes simplex virus transactivator VP16. Post-translationally, autoubiquitinated by the CRL2(KLHDC2) E3 ligase complex.

It is found in the nucleus. It participates in protein modification; protein ubiquitination. Functionally, substrate-recognition component of a Cul2-RING (CRL2) E3 ubiquitin-protein ligase complex of the DesCEND (destruction via C-end degrons) pathway, which recognizes a C-degron located at the extreme C terminus of target proteins, leading to their ubiquitination and degradation. The C-degron recognized by the DesCEND pathway is usually a motif of less than ten residues and can be present in full-length proteins, truncated proteins or proteolytically cleaved forms. The CRL2(KLHDC2) complex specifically recognizes proteins with a diglycine (Gly-Gly) at the C-terminus, leading to their ubiquitination and degradation. The CRL2(KLHDC2) complex mediates ubiquitination and degradation of truncated SELENOK and SELENOS selenoproteins produced by failed UGA/Sec decoding, which end with a diglycine. The CRL2(KLHDC2) complex also recognizes proteolytically cleaved proteins ending with Gly-Gly, such as the N-terminal fragment of USP1, leading to their degradation. May also act as an indirect repressor of CREB3-mediated transcription by interfering with CREB3-DNA-binding. The chain is Kelch domain-containing protein 2 from Bos taurus (Bovine).